Consider the following 256-residue polypeptide: tRNA (guanine-N(7)-)-methyltransferase (256 aa).

Residues 1 to 43 are disordered; that stretch reads MDVDPVNSEMELDNKPTCETVPGLPQKKHYRQRAHSNPHSDHD. Over residues 26–36 the composition is skewed to basic residues; sequence QKKHYRQRAHS. S-adenosyl-L-methionine contacts are provided by residues Gly-74, 97 to 98, 132 to 133, and Leu-152; these read EI and NA. Residue Asp-155 is part of the active site. Residue 230–232 coordinates S-adenosyl-L-methionine; the sequence is TEE.

Belongs to the class I-like SAM-binding methyltransferase superfamily. TrmB family.

Its subcellular location is the nucleus. It carries out the reaction guanosine(46) in tRNA + S-adenosyl-L-methionine = N(7)-methylguanosine(46) in tRNA + S-adenosyl-L-homocysteine. It participates in tRNA modification; N(7)-methylguanine-tRNA biosynthesis. Its function is as follows. Catalyzes the formation of N(7)-methylguanine at position 46 (m7G46) in tRNA. This chain is tRNA (guanine-N(7)-)-methyltransferase, found in Caenorhabditis briggsae.